We begin with the raw amino-acid sequence, 353 residues long: Tetrahedral aminopeptidase (353 aa).

The Zn(2+) site is built by histidine 68 and aspartate 182. Glutamate 212 serves as the catalytic Proton acceptor. Positions 213, 235, and 323 each coordinate Zn(2+).

It belongs to the peptidase M42 family. In terms of assembly, homododecamer. The assembly of six dimers results in a tetrahedral-shaped structure; all 12 active sites are located on the inside of the tetrahedron. Substrate access is granted by four pores with a maximal diameter of 18 Angstroms, allowing only small peptides and unfolded proteins access to the active site. Beside the four entry ports, TET contains 12 small product release openings, which are large enough to allow passage of only single amino acid residues. Requires Zn(2+) as cofactor. The cofactor is Co(2+).

Inhibited by EDTA and bestatin in vitro. Is insensitive to papain, antipain, chymostatin, leupeptin, pepstatin and aprotinin. Its function is as follows. Functions as an aminopeptidase, with a clear preference for leucine as the N-terminal amino acid. However, can also cleave moderately long polypeptide substrates of various compositions in a fairly unspecific manner. Has neither carboxypeptidase nor endoproteolytic activities, and it is devoid of N-terminal deblocking activity. Is involved in protein degradation, performing degradation of oligopeptides produced by the proteasome into single amino acids. This Pyrococcus horikoshii (strain ATCC 700860 / DSM 12428 / JCM 9974 / NBRC 100139 / OT-3) protein is Tetrahedral aminopeptidase (frvX).